The chain runs to 117 residues: Hemerythrin subunit alpha (117 aa).

Residues histidine 24, histidine 53, glutamate 57, histidine 72, histidine 76, histidine 105, and aspartate 110 each coordinate Fe cation.

This sequence belongs to the hemerythrin family. As to quaternary structure, octamer composed of two types of chains: alpha and beta.

Functionally, hemerythrin is a respiratory protein in blood cells of certain marine worms. The oxygen-binding site in each chain contains two iron atoms. In Lingula anatina (Brachiopod), this protein is Hemerythrin subunit alpha.